Reading from the N-terminus, the 513-residue chain is Putative ADP-ribosyl glycohydrolase L444 (513 aa).

Positions 1-23 (MSDKIQSRESKTTKPTKTEKISD) are enriched in basic and acidic residues. The interval 1-33 (MSDKIQSRESKTTKPTKTEKISDKSGNLSQVKS) is disordered. Residues 24-33 (KSGNLSQVKS) are compositionally biased toward polar residues.

This sequence belongs to the ADP-ribosylglycohydrolase family.

The protein is Putative ADP-ribosyl glycohydrolase L444 of Acanthamoeba polyphaga mimivirus (APMV).